A 187-amino-acid chain; its full sequence is Elongation factor P (187 aa).

This sequence belongs to the elongation factor P family.

The protein localises to the cytoplasm. It participates in protein biosynthesis; polypeptide chain elongation. Functionally, involved in peptide bond synthesis. Stimulates efficient translation and peptide-bond synthesis on native or reconstituted 70S ribosomes in vitro. Probably functions indirectly by altering the affinity of the ribosome for aminoacyl-tRNA, thus increasing their reactivity as acceptors for peptidyl transferase. This is Elongation factor P from Helicobacter pylori (strain P12).